A 981-amino-acid polypeptide reads, in one-letter code: NAD(+) hydrolase tir-1 (981 aa).

Disordered regions lie at residues 1 to 31 (MLPN…RSLK), 74 to 128 (QNEQ…PTQP), and 173 to 225 (LSTP…PVDQ). Composition is skewed to polar residues over residues 12 to 23 (PSFQSLNNNNQR) and 74 to 85 (QNEQDGETTSTD). Residues 87-97 (AFFELDDDDDL) are compositionally biased toward acidic residues. Residues 98-114 (SSPSVPGSPVDPPSISV) show a composition bias toward low complexity. The span at 115 to 128 (PLPPKSAPPCPTQP) shows a compositional bias: pro residues. Residues 182–200 (EEMHNGQVRKESEYRRFKS) are compositionally biased toward basic and acidic residues. 2 consecutive SAM domains span residues 614–678 (WTCA…LKVA) and 684–750 (VDES…AKHP). A TIR domain is found at 760-857 (KQIDVFISYR…EHQKNIIPIF (98 aa)). Residue 769–770 (RR) coordinates NAD(+). Glu-842 is an active-site residue. Polar residues-rich tracts occupy residues 908 to 939 (TTPT…TGPS), 954 to 963 (FTPTGSQERA), and 972 to 981 (PSASTTSDRN). A disordered region spans residues 908 to 981 (TTPTTKEMPS…PSASTTSDRN (74 aa)).

Belongs to the SARM1 family. Homodimer. Interacts with rab-1, pal-1 and unc-43. As to expression, highly expressed in hypodermis. Localizes to postsynaptic regions of axons.

The protein localises to the cytoplasm. The catalysed reaction is NAD(+) + H2O = ADP-D-ribose + nicotinamide + H(+). Its function is as follows. NAD(+) hydrolase, which plays a key role in non-apoptotic cell death by regulating NAD(+) metabolism. In response to stress, homooligomerizes and catalyzes cleavage of NAD(+) into ADP-D-ribose (ADPR) and nicotinamide; NAD(+) cleavage promoting non-apoptotic neuronal cell death. In males, involved in non-apoptotic death of the linker cell which guides gonad elongation during larval development. Required for both innate immune response and specification of AWC(OFF) neuron. During late embryogenesis, it acts downstream of CAMKII (unc-43) to regulate specification of asymmetric odorant receptors in AWC(OFF) neuron via the nsy-1/ASK1 pmk-1/p38 MAP kinase signaling cascade. Required to localize nsy-1 to postsynaptic regions of AWC neuron, suggesting that it may act by assembling a signaling complex that regulate odorant receptor expression. Also plays a central role in resistance to infection to a broad range of bacterial and fungi pathogens, possibly by activating pmk-1, independently of the NF-kappa-B pathway. Required for expression of antimicrobial peptides nlp-29 and nlp-31. Its role in immune response and neuron specification may be mediated by the same nsy-1/ASK1 pmk-1/p38 MAP kinase cascade signaling pathway. Involved in the response to anoxic conditions probably by activating the p38 pathway composed of nsy-1/sek-1/pmk-1. Involved in regulation of the serotonergic response of ADF neurons to pathogenic food. In addition, plays a role in the up-regulation of gcs-1 upon arsenite treatment, most likely through activation of pmk-1, to confer protection against toxicity induced by heavy metals. In terms of biological role, regulates expression of antimicrobial peptide nlp-29 in response to fungal infection or physical injury. This chain is NAD(+) hydrolase tir-1, found in Caenorhabditis elegans.